Consider the following 157-residue polypeptide: Snaclec 3 (157 aa).

Positions 1 to 23 (MGRLIFLSFGWLVVFLSLSGTGA) are cleaved as a signal peptide. Intrachain disulfides connect Cys27-Cys38, Cys55-Cys153, and Cys128-Cys145. The C-type lectin domain occupies 34–154 (YGQHCYRAFS…CAGHYPFICK (121 aa)).

The protein belongs to the snaclec family. As to quaternary structure, heterodimer; disulfide-linked. As to expression, expressed by the venom gland.

It is found in the secreted. In terms of biological role, interferes with one step of hemostasis (modulation of platelet aggregation, or coagulation cascade, for example). The protein is Snaclec 3 of Bitis gabonica (Gaboon adder).